The primary structure comprises 253 residues: E3 ubiquitin-protein ligase MARCHF3 (253 aa).

The RING-CH-type zinc finger occupies 63-123 (SPFNDRPMCR…ELCHFRFAVE (61 aa)). Zn(2+) contacts are provided by Cys71, Cys74, Cys87, Cys89, His97, Cys100, Cys113, and Cys116. Transmembrane regions (helical) follow at residues 145 to 165 (LFGD…SGWL) and 182 to 202 (AVGL…WTLV). Residues Ser237 and Ser243 each carry the phosphoserine modification.

In terms of assembly, interacts with MARCHF2 and STX6. As to expression, expressed predominantly in lung, colon and spleen. Present in liver (at protein level).

The protein resides in the cytoplasmic vesicle membrane. Its subcellular location is the early endosome membrane. The enzyme catalyses S-ubiquitinyl-[E2 ubiquitin-conjugating enzyme]-L-cysteine + [acceptor protein]-L-lysine = [E2 ubiquitin-conjugating enzyme]-L-cysteine + N(6)-ubiquitinyl-[acceptor protein]-L-lysine.. It functions in the pathway protein modification; protein ubiquitination. E3 ubiquitin-protein ligase which may be involved in endosomal trafficking. E3 ubiquitin ligases accept ubiquitin from an E2 ubiquitin-conjugating enzyme in the form of a thioester and then directly transfer the ubiquitin to targeted substrates. This Rattus norvegicus (Rat) protein is E3 ubiquitin-protein ligase MARCHF3 (Marchf3).